The sequence spans 719 residues: MSDISVEKLTELEAAAELERLARAIAHHDELYHAKDRPEISDAAYDALKRRNEAIEAHFPALVRDDSPSRRVGAAPALATFAPVVHARPMLSLDNAFSDEDVRDFVGSVYRFLGQLPDDSIAFTAEPKIDGLSMSIRYENGILVSGATRGDGTTGENVTANIRTIAEIPNRLPAGAPAVVEVRGEVYMAKSDFLTLNAQMAAEGKQTYVNPRNTAAGSLRQLDAKVTASRKLRFFAYAWGEMSDMPADTQLGMVEVFRQWGFPVNPLMKRFNSVDGLLAHYRAIGMERPTLDYDIDGVVYKVDRLDLQTRLGFRSRSPRWAIAHKFPAEQALTILRGIDIQVGRTGALTPVARLEPITVGGVVVTNATLHNEDYIKGIGQKGEPIREGRDIRIGDSVIVQRAGDVIPQIVDVVLEEGKKRGEPYQFPHVCPACGSHAVREEGEAVRRCTGGLICPAQAVERIRHFVSRNAFDIEGLGEKQVEFFFNAEDPALCIRSPADIFTLKKRQENSLTKLQNIEGFGATSVKKLYDAIDARREIALHRFLFGLGIRHVGEVNAKRLARAYLSYAAFEKAALEAVPPKEGDRTDKGSEAWQDMLAVEGIGSIVAEAVVDFYGEPHNREVLAALLAEVTPLDEEARVATGSPVEGKTVVFTGSLERMSRDEAKAMAERHGAKTAGSVSKKTDLVVAGPGAGSKLAKATELGIEVINEDDWFKLVGED.

Residues 42-46, 92-93, and E126 each bind NAD(+); these read DAAYD and SL. K128 functions as the N6-AMP-lysine intermediate in the catalytic mechanism. NAD(+)-binding residues include R149, E185, K301, and K325. Zn(2+) contacts are provided by C430, C433, C448, and C454. Residues 640–719 form the BRCT domain; the sequence is ATGSPVEGKT…DDWFKLVGED (80 aa).

The protein belongs to the NAD-dependent DNA ligase family. LigA subfamily. It depends on Mg(2+) as a cofactor. Requires Mn(2+) as cofactor.

It carries out the reaction NAD(+) + (deoxyribonucleotide)n-3'-hydroxyl + 5'-phospho-(deoxyribonucleotide)m = (deoxyribonucleotide)n+m + AMP + beta-nicotinamide D-nucleotide.. Functionally, DNA ligase that catalyzes the formation of phosphodiester linkages between 5'-phosphoryl and 3'-hydroxyl groups in double-stranded DNA using NAD as a coenzyme and as the energy source for the reaction. It is essential for DNA replication and repair of damaged DNA. The chain is DNA ligase from Brucella melitensis biotype 2 (strain ATCC 23457).